Here is a 311-residue protein sequence, read N- to C-terminus: Aspartate carbamoyltransferase catalytic subunit (311 aa).

Carbamoyl phosphate contacts are provided by arginine 55 and threonine 56. Lysine 85 lines the L-aspartate pocket. Residues arginine 106, histidine 135, and glutamine 138 each contribute to the carbamoyl phosphate site. L-aspartate-binding residues include arginine 168 and arginine 230. Residues leucine 268 and proline 269 each contribute to the carbamoyl phosphate site.

Belongs to the aspartate/ornithine carbamoyltransferase superfamily. ATCase family. As to quaternary structure, heterododecamer (2C3:3R2) of six catalytic PyrB chains organized as two trimers (C3), and six regulatory PyrI chains organized as three dimers (R2).

It catalyses the reaction carbamoyl phosphate + L-aspartate = N-carbamoyl-L-aspartate + phosphate + H(+). Its pathway is pyrimidine metabolism; UMP biosynthesis via de novo pathway; (S)-dihydroorotate from bicarbonate: step 2/3. In terms of biological role, catalyzes the condensation of carbamoyl phosphate and aspartate to form carbamoyl aspartate and inorganic phosphate, the committed step in the de novo pyrimidine nucleotide biosynthesis pathway. The sequence is that of Aspartate carbamoyltransferase catalytic subunit from Escherichia fergusonii (strain ATCC 35469 / DSM 13698 / CCUG 18766 / IAM 14443 / JCM 21226 / LMG 7866 / NBRC 102419 / NCTC 12128 / CDC 0568-73).